The chain runs to 322 residues: Tetraacyldisaccharide 4'-kinase (322 aa).

54 to 61 (SVGGTGKT) lines the ATP pocket.

The protein belongs to the LpxK family.

It carries out the reaction a lipid A disaccharide + ATP = a lipid IVA + ADP + H(+). Its pathway is glycolipid biosynthesis; lipid IV(A) biosynthesis; lipid IV(A) from (3R)-3-hydroxytetradecanoyl-[acyl-carrier-protein] and UDP-N-acetyl-alpha-D-glucosamine: step 6/6. Transfers the gamma-phosphate of ATP to the 4'-position of a tetraacyldisaccharide 1-phosphate intermediate (termed DS-1-P) to form tetraacyldisaccharide 1,4'-bis-phosphate (lipid IVA). The chain is Tetraacyldisaccharide 4'-kinase from Francisella tularensis subsp. tularensis (strain FSC 198).